Consider the following 256-residue polypeptide: (E)-benzylidenesuccinyl-CoA hydratase (256 aa).

Residue glutamate 110 is the Nucleophile of the active site. Residue glutamate 130 is the Proton acceptor of the active site.

The protein belongs to the enoyl-CoA hydratase/isomerase family. Homotrimer.

The enzyme catalyses (2S)-[(R)-hydroxy(phenyl)methyl]succinyl-CoA = (E)-2-benzylidenesuccinyl-CoA + H2O. It participates in xenobiotic degradation; toluene degradation. Involved in an anaerobic toluene degradation pathway. Catalyzes the hydration of (E)-2-benzylidenesuccinyl-CoA to the corresponding alcohol intermediate, 2-(alpha-hydroxybenzyl)succinyl-CoA. Also accepts the N-acetylcysteamine (NAC) thioester of (E)-benzylidenesuccinate. This is (E)-benzylidenesuccinyl-CoA hydratase from Thauera aromatica.